The sequence spans 48 residues: Small, acid-soluble spore protein P (48 aa).

The span at 1 to 12 (MTNKNDGKDMRK) shows a compositional bias: basic and acidic residues. The tract at residues 1–48 (MTNKNDGKDMRKNAPKGAQPGQPEPLSGSKKVKNRNHTRQKHNSSHDM) is disordered. Basic residues predominate over residues 30–48 (KKVKNRNHTRQKHNSSHDM).

Belongs to the SspP family.

Its subcellular location is the spore core. This chain is Small, acid-soluble spore protein P, found in Bacillus licheniformis (strain ATCC 14580 / DSM 13 / JCM 2505 / CCUG 7422 / NBRC 12200 / NCIMB 9375 / NCTC 10341 / NRRL NRS-1264 / Gibson 46).